A 1305-amino-acid chain; its full sequence is Myosin-IIIb (1305 aa).

The region spanning 15 to 281 (WEIIETIGKG…VTHLLDHPFI (267 aa)) is the Protein kinase domain. Residues 21–29 (IGKGTYGKV) and lysine 44 contribute to the ATP site. Aspartate 144 (proton acceptor) is an active-site residue. One can recognise a Myosin motor domain in the interval 331 to 1046 (CLEDDLVNLE…HVEQLNLLLR (716 aa)). The segment at 927–949 (LMDLLSKMVVGQPHFIRCIKPND) is actin-binding. 2 consecutive IQ domains span residues 1048–1077 (VMGR…KREK) and 1075–1104 (REKG…RRSE). Disordered regions lie at residues 1093–1164 (RKLK…VTSG) and 1200–1233 (SPCE…MLSS).

The protein in the C-terminal section; belongs to the TRAFAC class myosin-kinesin ATPase superfamily. Myosin family. It in the N-terminal section; belongs to the protein kinase superfamily. STE Ser/Thr protein kinase family. As to quaternary structure, interacts (via C-terminus) with ESPN. Interacts (via C-terminus) with ESPNL. As to expression, expressed in the cochlear hair cells (at protein level). Expressed in utricle hair bundles (at protein level).

The protein localises to the cytoplasm. It is found in the cytoskeleton. The protein resides in the cell projection. Its subcellular location is the stereocilium. The catalysed reaction is L-seryl-[protein] + ATP = O-phospho-L-seryl-[protein] + ADP + H(+). It carries out the reaction L-threonyl-[protein] + ATP = O-phospho-L-threonyl-[protein] + ADP + H(+). In terms of biological role, probable actin-based motor with a protein kinase activity. Required for normal cochlear hair bundle development and hearing. Plays an important role in the early steps of cochlear hair bundle morphogenesis. Influences the number and lengths of stereocilia to be produced and limits the growth of microvilli within the forming auditory hair bundles thereby contributing to the architecture of the hair bundle, including its staircase pattern. Involved in the elongation of actin in stereocilia tips by transporting the actin regulatory factor ESPN to the plus ends of actin filaments. The polypeptide is Myosin-IIIb (Myo3b) (Mus musculus (Mouse)).